The following is a 388-amino-acid chain: MTAIIRQFLKLEAAGGLLLIITAIIALIMANSPLQGIYQQFLNISVAVQFAALEINKPLLLWINDGLMAVFFLIVGLEVKRELLEGSLAGRDKALFPVIAAIGGMVAPALIYLLFNGNDEFTRQGWAIPAATDIAFALGVMALLSKRVPTELKVFLLALAIIDDLGVIVIIALFYTKTVSLVALGLSAAMIALLVWMNWRGVEKTSAYLAVGAILWVCILKSGVHATLAGVIVGFLIPLRGQNGHSPSELLEHGLHPWVAYLILPLFAFANAGVALNGVTLNGLTDILPLGIAVALFLGKPLGIFLFSYISIQIGFAKLPQQINLKQIFAVSVLCGIGFTMSIFISGLAFEGVDESFSVYSRLGILMGSTIAAFMGYGLLRMVLPKKK.

A run of 12 helical transmembrane segments spans residues 8-28 (FLKL…IALI), 33-53 (PLQG…FAAL), 59-79 (LLLW…GLEV), 95-115 (LFPV…YLLF), 125-145 (GWAI…ALLS), 154-174 (VFLL…IALF), 179-199 (VSLV…WMNW), 217-237 (VCIL…GFLI), 259-279 (VAYL…LNGV), 287-307 (ILPL…IFLF), 328-348 (IFAV…ISGL), and 363-383 (LGIL…LRMV).

The protein belongs to the NhaA Na(+)/H(+) (TC 2.A.33) antiporter family.

The protein localises to the cell inner membrane. The enzyme catalyses Na(+)(in) + 2 H(+)(out) = Na(+)(out) + 2 H(+)(in). In terms of biological role, na(+)/H(+) antiporter that extrudes sodium in exchange for external protons. The protein is Na(+)/H(+) antiporter NhaA of Photorhabdus laumondii subsp. laumondii (strain DSM 15139 / CIP 105565 / TT01) (Photorhabdus luminescens subsp. laumondii).